A 147-amino-acid polypeptide reads, in one-letter code: E3 ubiquitin-protein ligase RHA2B (147 aa).

The segment at 74–116 (CIVCLSKLKTGEEVRKLDCRHVFHKQCLEGWLQHLNFNCPLCR) adopts an RING-type; atypical zinc-finger fold.

Interacts with NAC19. Expressed in vascular tissue, root tips, embryos and pistils.

Its subcellular location is the cytoplasm. The protein resides in the nucleus. The catalysed reaction is S-ubiquitinyl-[E2 ubiquitin-conjugating enzyme]-L-cysteine + [acceptor protein]-L-lysine = [E2 ubiquitin-conjugating enzyme]-L-cysteine + N(6)-ubiquitinyl-[acceptor protein]-L-lysine.. The protein operates within protein modification; protein ubiquitination. In terms of biological role, E3 ubiquitin-protein ligase involved in the positive regulation of abscisic acid (ABA) signaling and responses to salt and osmotic stresses during seed germination and early seedling development. Acts additively with RHA2A in regulating ABA signaling and drought response. Possesses E3 ubiquitin ligase activity in vitro. The protein is E3 ubiquitin-protein ligase RHA2B of Arabidopsis thaliana (Mouse-ear cress).